The chain runs to 509 residues: Lysine--tRNA ligase (509 aa).

Residues Glu418 and Glu425 each contribute to the Mg(2+) site.

This sequence belongs to the class-II aminoacyl-tRNA synthetase family. Homodimer. Requires Mg(2+) as cofactor.

The protein resides in the cytoplasm. It catalyses the reaction tRNA(Lys) + L-lysine + ATP = L-lysyl-tRNA(Lys) + AMP + diphosphate. The protein is Lysine--tRNA ligase of Acinetobacter baumannii (strain AB307-0294).